Reading from the N-terminus, the 151-residue chain is Small ribosomal subunit protein uS15 (151 aa).

Residues 1–11 (MPHRSRHKKGR) are compositionally biased toward basic residues. The interval 1 to 24 (MPHRSRHKKGRSSSVRPPHPTVPT) is disordered.

Belongs to the universal ribosomal protein uS15 family. In terms of assembly, part of the 30S ribosomal subunit.

This chain is Small ribosomal subunit protein uS15, found in Pyrobaculum calidifontis (strain DSM 21063 / JCM 11548 / VA1).